A 246-amino-acid polypeptide reads, in one-letter code: MSIDWNWGIFLQQAPFGNTTYLGWIWSGFQVTIALSICAWIIAFLVGSFFGILRTVPNRFLSGLGTLYVELFRNVPLIVQFFTWYLVIPELLPEKIGMWFKAELDPNIQFFLSSMLCLGLFTAARVCEQVRAAIQSLPRGQKNAALAMGLTLPQAYRYVLLPNAYRVIVPPMTSEMMNLVKNSAIASTIGLVDMAAQAGKLLDYSAHAWESFTAITLAYVLINAFIMLVMTLVERKVRLPGNMGGK.

Residues 29-230 (FQVTIALSIC…LINAFIMLVM (202 aa)) form the ABC transmembrane type-1 domain. 5 helical membrane passes run 33–53 (IALS…FGIL), 74–94 (NVPL…LLPE), 104–124 (LDPN…FTAA), 179–196 (LVKN…DMAA), and 212–232 (FTAI…VMTL).

Belongs to the binding-protein-dependent transport system permease family. HisMQ subfamily. The complex is composed of two ATP-binding proteins (GltL), two transmembrane proteins (GltJ and GltK) and a solute-binding protein (GltI).

It is found in the cell inner membrane. Its function is as follows. Part of the ABC transporter complex GltIJKL involved in glutamate and aspartate uptake. Probably responsible for the translocation of the substrate across the membrane. This is Glutamate/aspartate import permease protein GltJ (gltJ) from Escherichia coli O6:H1 (strain CFT073 / ATCC 700928 / UPEC).